The chain runs to 2890 residues: Bifunctional DNA-directed RNA polymerase subunit beta-beta' (2890 aa).

The tract at residues 1 to 1377 (MSKKIPLKNR…DINIFGDDVD (1377 aa)) is DNA-directed RNA polymerase subunit beta. A DNA-directed RNA polymerase subunit beta' region spans residues 1384 to 2890 (PIVIKEDDRP…LRTLEDDPKF (1507 aa)). Positions 1449, 1451, 1465, and 1468 each coordinate Zn(2+). Residues D1849, D1851, and D1853 each contribute to the Mg(2+) site. Residues C2179, C2253, C2260, and C2263 each contribute to the Zn(2+) site.

The protein in the N-terminal section; belongs to the RNA polymerase beta chain family. This sequence in the C-terminal section; belongs to the RNA polymerase beta' chain family. In terms of assembly, the RNAP catalytic core consists of 2 alpha, 1 beta/beta' and 1 omega subunit. When a sigma factor is associated with the core the holoenzyme is formed, which can initiate transcription. Mg(2+) serves as cofactor. The cofactor is Zn(2+).

It catalyses the reaction RNA(n) + a ribonucleoside 5'-triphosphate = RNA(n+1) + diphosphate. In terms of biological role, DNA-dependent RNA polymerase catalyzes the transcription of DNA into RNA using the four ribonucleoside triphosphates as substrates. The polypeptide is Bifunctional DNA-directed RNA polymerase subunit beta-beta' (rpoBC) (Helicobacter pylori (strain Shi470)).